The sequence spans 475 residues: Probable phenylalanine--tRNA ligase alpha subunit (475 aa).

Residues T2–K151 are contains the major tRNA-Phe binding sites. L-phenylalanine is bound by residues T309, Q351–E353, and Y391. A Mg(2+)-binding site is contributed by E393. F417 contributes to the L-phenylalanine binding site.

This sequence belongs to the class-II aminoacyl-tRNA synthetase family. Phe-tRNA synthetase alpha subunit type 2 subfamily. In terms of assembly, tetramer of two alpha and two beta subunits. Mg(2+) is required as a cofactor.

It localises to the cytoplasm. It catalyses the reaction tRNA(Phe) + L-phenylalanine + ATP = L-phenylalanyl-tRNA(Phe) + AMP + diphosphate + H(+). The polypeptide is Probable phenylalanine--tRNA ligase alpha subunit (Encephalitozoon cuniculi (strain GB-M1) (Microsporidian parasite)).